The chain runs to 136 residues: Peptide methionine sulfoxide reductase MsrB (136 aa).

The MsrB domain occupies 9-136 (DAEWKALLAE…NSASLDFKKK (128 aa)). 4 residues coordinate Zn(2+): Cys53, Cys56, Cys102, and Cys105. The Nucleophile role is filled by Cys125.

Belongs to the MsrB Met sulfoxide reductase family. The cofactor is Zn(2+).

It catalyses the reaction L-methionyl-[protein] + [thioredoxin]-disulfide + H2O = L-methionyl-(R)-S-oxide-[protein] + [thioredoxin]-dithiol. The protein is Peptide methionine sulfoxide reductase MsrB of Variovorax paradoxus (strain S110).